A 419-amino-acid chain; its full sequence is Maltoporin 2 (419 aa).

An N-terminal signal peptide occupies residues 1–23 (MKTSLRTLSVALAAALVSPSVLA).

It belongs to the porin LamB (TC 1.B.3) family. Homotrimer formed of three 18-stranded antiparallel beta-barrels, containing three independent channels.

Its subcellular location is the cell outer membrane. The catalysed reaction is beta-maltose(in) = beta-maltose(out). Functionally, involved in the transport of maltose and maltodextrins. The chain is Maltoporin 2 from Yersinia pseudotuberculosis serotype O:1b (strain IP 31758).